Here is a 378-residue protein sequence, read N- to C-terminus: Probable tRNA sulfurtransferase (378 aa).

The THUMP domain maps to 51 to 153 (DANLEKLQYV…SDKTYLFSKT (103 aa)). Residues 171–172 (LM), 196–197 (SF), arginine 253, glycine 275, and glutamine 284 contribute to the ATP site.

This sequence belongs to the ThiI family.

It is found in the cytoplasm. The enzyme catalyses [ThiI sulfur-carrier protein]-S-sulfanyl-L-cysteine + a uridine in tRNA + 2 reduced [2Fe-2S]-[ferredoxin] + ATP + H(+) = [ThiI sulfur-carrier protein]-L-cysteine + a 4-thiouridine in tRNA + 2 oxidized [2Fe-2S]-[ferredoxin] + AMP + diphosphate. It carries out the reaction [ThiS sulfur-carrier protein]-C-terminal Gly-Gly-AMP + S-sulfanyl-L-cysteinyl-[cysteine desulfurase] + AH2 = [ThiS sulfur-carrier protein]-C-terminal-Gly-aminoethanethioate + L-cysteinyl-[cysteine desulfurase] + A + AMP + 2 H(+). The protein operates within cofactor biosynthesis; thiamine diphosphate biosynthesis. Its function is as follows. Catalyzes the ATP-dependent transfer of a sulfur to tRNA to produce 4-thiouridine in position 8 of tRNAs, which functions as a near-UV photosensor. Also catalyzes the transfer of sulfur to the sulfur carrier protein ThiS, forming ThiS-thiocarboxylate. This is a step in the synthesis of thiazole, in the thiamine biosynthesis pathway. The sulfur is donated as persulfide by IscS. The polypeptide is Probable tRNA sulfurtransferase (Mycoplasmopsis agalactiae (strain NCTC 10123 / CIP 59.7 / PG2) (Mycoplasma agalactiae)).